The following is a 328-amino-acid chain: DhaKLM operon coactivator DhaQ (328 aa).

Residues 6–328 (STNEIPEEML…LNVPTGAFAW (323 aa)) enclose the DhaK domain. Histidine 215 is modified (tele-(1,2,3-trihydroxypropan-2-yl)histidine).

Homodimer. Interacts with a homodimer of DhaS.

In terms of biological role, coactivator for the transcription factor DhaS. The heterotetramer formed by DhaQ and DhaS functions as a transcriptional regulator. Activated by covalent binding of dihydroxyacetone to DhaQ. The complex activates the dhaKLM operon. The chain is DhaKLM operon coactivator DhaQ (dhaQ) from Lactococcus lactis subsp. lactis (strain IL1403) (Streptococcus lactis).